Here is a 107-residue protein sequence, read N- to C-terminus: U1-lycotoxin-Ls1o (107 aa).

An N-terminal signal peptide occupies residues 1-20 (MMKVLVVVALLVTLISYSSS). Positions 21-41 (EGIDDLEADELLSLMANEQTR) are excised as a propeptide. Intrachain disulfides connect Cys44–Cys59, Cys51–Cys68, Cys58–Cys86, and Cys70–Cys84.

The protein belongs to the neurotoxin 19 (CSTX) family. 04 (U1-Lctx) subfamily. In terms of tissue distribution, expressed by the venom gland.

It localises to the secreted. In Lycosa singoriensis (Wolf spider), this protein is U1-lycotoxin-Ls1o.